A 195-amino-acid chain; its full sequence is Biogenesis of lysosome-related organelles complex 1 subunit 3 (195 aa).

Residues 1–11 (MESSQGRRRRP) show a composition bias toward basic residues. The tract at residues 1-72 (MESSQGRRRR…PEPEPTVVPV (72 aa)) is disordered. A compositionally biased stretch (low complexity) spans 25-51 (ELSASSSEEELYLGPSGPTRGRPTGLR). A Phosphothreonine modification is found at Thr-59. At Ser-61 the chain carries Phosphoserine.

It belongs to the BLOC1S3 family. As to quaternary structure, octamer composed of one copy each BLOC1S1, BLOC1S2, BLOC1S3, BLOC1S4, BLOC1S5, BLOC1S6, DTNBP1/BLOC1S7 and SNAPIN/BLOC1S8. Interacts directly with BLOC1S2. Component of the biogenesis of lysosome-related organelles complex 1 (BLOC-1) composed of BLOC1S1, BLOC1S2, BLOC1S3, BLOC1S4, BLOC1S5, BLOC1S6, DTNBP1/BLOC1S7 and SNAPIN/BLOC1S8. The BLOC-1 complex associates with the AP-3 protein complex and membrane protein cargos. Interacts with BLOC1S4, BLOC1S5 and BLOC1S6. Phosphorylated. Ubiquitously expressed.

Its subcellular location is the cytoplasm. Functionally, component of the BLOC-1 complex, a complex that is required for normal biogenesis of lysosome-related organelles (LRO), such as platelet dense granules and melanosomes. In concert with the AP-3 complex, the BLOC-1 complex is required to target membrane protein cargos into vesicles assembled at cell bodies for delivery into neurites and nerve terminals. The BLOC-1 complex, in association with SNARE proteins, is also proposed to be involved in neurite extension. Plays a role in intracellular vesicle trafficking. The protein is Biogenesis of lysosome-related organelles complex 1 subunit 3 (Bloc1s3) of Mus musculus (Mouse).